Here is a 208-residue protein sequence, read N- to C-terminus: Mediator of RNA polymerase II transcription subunit 18 (208 aa).

A Phosphoserine modification is found at Ser-66.

It belongs to the Mediator complex subunit 18 family. Component of the Mediator complex, which is composed of MED1, MED4, MED6, MED7, MED8, MED9, MED10, MED11, MED12, MED13, MED13L, MED14, MED15, MED16, MED17, MED18, MED19, MED20, MED21, MED22, MED23, MED24, MED25, MED26, MED27, MED29, MED30, MED31, CCNC, CDK8 and CDC2L6/CDK11. The MED12, MED13, CCNC and CDK8 subunits form a distinct module termed the CDK8 module. Mediator containing the CDK8 module is less active than Mediator lacking this module in supporting transcriptional activation. Individual preparations of the Mediator complex lacking one or more distinct subunits have been variously termed ARC, CRSP, DRIP, PC2, SMCC and TRAP.

The protein localises to the nucleus. Its function is as follows. Component of the Mediator complex, a coactivator involved in the regulated transcription of nearly all RNA polymerase II-dependent genes. Mediator functions as a bridge to convey information from gene-specific regulatory proteins to the basal RNA polymerase II transcription machinery. Mediator is recruited to promoters by direct interactions with regulatory proteins and serves as a scaffold for the assembly of a functional preinitiation complex with RNA polymerase II and the general transcription factors. The sequence is that of Mediator of RNA polymerase II transcription subunit 18 (MED18) from Bos taurus (Bovine).